The following is a 404-amino-acid chain: Argininosuccinate synthase (404 aa).

Residues 10–18 (AYSGGLDTS) and alanine 37 contribute to the ATP site. Residues tyrosine 90 and serine 95 each contribute to the L-citrulline site. Glycine 120 lines the ATP pocket. 3 residues coordinate L-aspartate: threonine 122, asparagine 126, and aspartate 127. Asparagine 126 lines the L-citrulline pocket. L-citrulline contacts are provided by arginine 130, serine 180, serine 189, glutamate 265, and tyrosine 277.

This sequence belongs to the argininosuccinate synthase family. Type 1 subfamily. In terms of assembly, homotetramer.

Its subcellular location is the cytoplasm. The catalysed reaction is L-citrulline + L-aspartate + ATP = 2-(N(omega)-L-arginino)succinate + AMP + diphosphate + H(+). Its pathway is amino-acid biosynthesis; L-arginine biosynthesis; L-arginine from L-ornithine and carbamoyl phosphate: step 2/3. This Helicobacter hepaticus (strain ATCC 51449 / 3B1) protein is Argininosuccinate synthase.